A 673-amino-acid polypeptide reads, in one-letter code: MPSYTVTVATGSQWFAGTDDYIYLSLIGSAGCSEKHLLDKAFYNDFERGAVDSYDVTVDEELGEIQLVRIEKRKYWLHDDWYLKYITLKTPTDYIEFPCYRWITGEGEIVLRDGRAKLARDDQIHILKQHRRKELEARQKQYRWMEWNPGFPLSIDAKCHKDLPRDIQFDSEKGVDFVLNYSKAMENLFINRFMHMFQSSWNDFADFEKIFVKISNTISERVKNHWQEDLMFGYQFLNGCNPVLIKRCRELPQKLPVTTEMVECSLERHLSLEQEVQEGNIFIVDYELLDGIDANKTDPCTHQFLAAPICLLYKNLANKIVPIAIQLNQAPGEKNPIFLPSDAKYDWLLAKIWVRSSDFHVHQTITHLLCTHLVSEVFGIAMYRQLPAVHPIFKLLVAHVRFTIAINTKAREQLICEYGLFDKANATGGGGHVQMVQRAVQDLTYSSLCFPEAIKARGMDSTEDIPYYFYRDDGLLVWEAIQSFTSEVVSIYYEDDQVVMEDQELQDFVKDVYVYGMRGRKASGFPKSIKSREKLSEYLTVVIFTASAQHAAVNFGQYDWCSWIPNAPPTMRAPPATAKGVVTIEQIVATLPDRGRSCWHLGAVWALSQFQENELFLGMYPEEHFIEKPVKEAMTRFRKNLEAIVNVIAERNKNKKLPYYYLSPDRIPNSVAI.

The 116-residue stretch at 2 to 117 folds into the PLAT domain; the sequence is PSYTVTVATG…EIVLRDGRAK (116 aa). 8 residues coordinate Ca(2+): Gly17, Thr18, Asp19, Asn44, Asp45, Glu47, Asp79, and Asp80. One can recognise a Lipoxygenase domain in the interval 118–673; sequence LARDDQIHIL…PDRIPNSVAI (556 aa). Ser271 is subject to Phosphoserine. Residues His367 and His372 each contribute to the Fe cation site. Ser523 is subject to Phosphoserine. Fe cation-binding residues include His550, Asn554, and Ile673.

Belongs to the lipoxygenase family. Homodimer. Interacts with ALOX5AP and LTC4S. Interacts with COTL1, the interaction is required for stability and efficient catalytic activity. Interacts with PIK3R1; this interaction bridges ALOX5 with CD40 after CD40 ligation in B cells and leads to the production of reactive oxygen species (ROS). Interacts (via PLAT domain) with DICER1 (via Dicer dsRNA-binding fold domain); this interaction enhances arachidonate 5-lipoxygenase activity and modifies the miRNA precursor processing activity of DICER1. It depends on Fe cation as a cofactor. Serine phosphorylation by MAPKAPK2 is stimulated by arachidonic acid. Phosphorylation on Ser-523 by PKA has an inhibitory effect. Phosphorylation on Ser-271 prevents export from the nucleus. Phosphorylation at Ser-523 is stimulated by 8-bromo-3',5'-cyclic AMP or prostaglandin E2.

It is found in the cytoplasm. The protein resides in the nucleus matrix. Its subcellular location is the nucleus membrane. It localises to the perinuclear region. The protein localises to the cytosol. It is found in the nucleus envelope. The protein resides in the nucleus intermembrane space. It carries out the reaction (5Z,8Z,11Z,14Z)-eicosatetraenoate + O2 = leukotriene A4 + H2O. The catalysed reaction is 18-HEPE + O2 = (5S)-hydroperoxy-18-hydroxy-(7E,9E,11Z,14Z,16E)-eicosapentaenoate. The enzyme catalyses (18R)-hydroxy-(5Z,8Z,11Z,14Z,16E)-eicosapentaenoate + O2 = (5S)-hydroperoxy-(18R)-hydroxy-(6E,8Z,11Z,14Z,16E)-eicosapentaenoate. It catalyses the reaction (18S)-hydroxy-(5Z,8Z,11Z,14Z,16E)-eicosapentaenoate + O2 = (5S)-hydroperoxy-(18S)-hydroxy-(6E,8Z,11Z,14Z,16E)-eicosapentaenoate. It carries out the reaction (5S)-hydroperoxy-(18S)-hydroxy-(6E,8Z,11Z,14Z,16E)-eicosapentaenoate = (5S,6S)-epoxy-(18S)-hydroxy-(7E,9E,11Z,14Z,16E)-eicosapentaenoate + H2O. The catalysed reaction is (5S)-hydroperoxy-(18R)-hydroxy-(6E,8Z,11Z,14Z,16E)-eicosapentaenoate = (5S,6S)-epoxy-(18R)-hydroxy-(7E,9E,11Z,14Z,16E)-eicosapentaenoate + H2O. The enzyme catalyses (5S)-hydroperoxy-18-hydroxy-(7E,9E,11Z,14Z,16E)-eicosapentaenoate = (5S,6S)-epoxy-18-hydroxy-(7E,9E,11Z,14Z,16E)-eicosapentaenoate + H2O. It catalyses the reaction (5Z,8Z,11Z,14Z)-eicosatetraenoate + O2 = (5S)-hydroperoxy-(6E,8Z,11Z,14Z)-eicosatetraenoate. It carries out the reaction (15S)-hydroxy-(5Z,8Z,11Z,13E)-eicosatetraenoate + O2 = (5S)-hydroperoxy-(15S)-hydroxy-(6E,8Z,11Z,13E)-eicosatetraenoate. The catalysed reaction is (5S)-hydroperoxy-(6E,8Z,11Z,14Z)-eicosatetraenoate = leukotriene A4 + H2O. The enzyme catalyses (5Z,8Z,11Z,14Z)-eicosatetraenoate + O2 = (8S)-hydroperoxy-(5Z,9E,11Z,14Z)-eicosatetraenoate. It catalyses the reaction (5Z,8Z,11Z,14Z)-eicosatetraenoate + O2 = (12S)-hydroperoxy-(5Z,8Z,10E,14Z)-eicosatetraenoate. It carries out the reaction (5Z,8Z)-eicosadienoate + O2 = (5S)-hydroperoxy-(6E,8Z)-eicosadienoate. The catalysed reaction is (12S)-hydroxy-(5Z,8Z,10E,14Z)-eicosatetraenoate + O2 = (5S)-hydroperoxy-(12S)-hydroxy-(6E,8Z,10E,14Z)-eicosatetraenoate. The enzyme catalyses (5Z,8Z,11Z,14Z,17Z)-eicosapentaenoate + O2 = 5-hydroperoxy-(6E,8Z,11Z,14Z,17Z)-eicosapentaenoate. It catalyses the reaction (4Z,7Z,10Z,13Z,16Z,19Z)-docosahexaenoate + O2 = (14S)-hydroperoxy-(4Z,7Z,10Z,12E,16Z,19Z)-docosahexaenoate. It carries out the reaction (4Z,7Z,10Z,13Z,16Z,19Z)-docosahexaenoate + O2 = (7S)-hydroperoxy-(4Z,8E,10Z,13Z,16Z,19Z)-docosahexaenoate. The catalysed reaction is (4Z,7Z,10Z,13Z,16Z,19Z)-docosahexaenoate + O2 = (17S)-hydroperoxy-(4Z,7Z,10Z,13Z,15E,19Z)-docosahexaenoate. It participates in lipid metabolism; leukotriene A4 biosynthesis. Functionally, catalyzes the oxygenation of arachidonate to 5-hydroperoxyeicosatetraenoate (5-HPETE) followed by the dehydration to 5,6- epoxyeicosatetraenoate (Leukotriene A4/LTA4), the first two steps in the biosynthesis of leukotrienes, which are potent mediators of inflammation. Also catalyzes the oxygenation of arachidonate into 8-hydroperoxyicosatetraenoate (8-HPETE) and 12-hydroperoxyicosatetraenoate (12-HPETE). Displays lipoxin synthase activity being able to convert (15S)-HETE into a conjugate tetraene. Although arachidonate is the preferred substrate, this enzyme can also metabolize oxidized fatty acids derived from arachidonate such as (15S)-HETE, eicosapentaenoate (EPA) such as (18R)- and (18S)-HEPE or docosahexaenoate (DHA) which lead to the formation of specialized pro-resolving mediators (SPM) lipoxin and resolvins E and D respectively, therefore it participates in anti-inflammatory responses. Oxidation of DHA directly inhibits endothelial cell proliferation and sprouting angiogenesis via peroxisome proliferator-activated receptor gamma (PPARgamma). It does not catalyze the oxygenation of linoleic acid and does not convert (5S)-HETE to lipoxin isomers. In addition to inflammatory processes, it participates in dendritic cell migration, wound healing through an antioxidant mechanism based on heme oxygenase-1 (HO-1) regulation expression, monocyte adhesion to the endothelium via ITGAM expression on monocytes. Moreover, it helps establish an adaptive humoral immunity by regulating primary resting B cells and follicular helper T cells and participates in the CD40-induced production of reactive oxygen species (ROS) after CD40 ligation in B cells through interaction with PIK3R1 that bridges ALOX5 with CD40. May also play a role in glucose homeostasis, regulation of insulin secretion and palmitic acid-induced insulin resistance via AMPK. Can regulate bone mineralization and fat cell differentiation increases in induced pluripotent stem cells. This Mesocricetus auratus (Golden hamster) protein is Polyunsaturated fatty acid 5-lipoxygenase.